The primary structure comprises 380 residues: Queuine tRNA-ribosyltransferase (380 aa).

The active-site Proton acceptor is the aspartate 96. Substrate-binding positions include 96 to 100 (DSGGF), aspartate 150, glutamine 193, and glycine 220. Residues 251–257 (GVGAPDS) form an RNA binding region. The active-site Nucleophile is aspartate 270. The RNA binding; important for wobble base 34 recognition stretch occupies residues 275–279 (TRIAR). Zn(2+)-binding residues include cysteine 308, cysteine 310, cysteine 313, and histidine 339.

The protein belongs to the queuine tRNA-ribosyltransferase family. In terms of assembly, homodimer. Within each dimer, one monomer is responsible for RNA recognition and catalysis, while the other monomer binds to the replacement base PreQ1. Requires Zn(2+) as cofactor.

It carries out the reaction 7-aminomethyl-7-carbaguanine + guanosine(34) in tRNA = 7-aminomethyl-7-carbaguanosine(34) in tRNA + guanine. It participates in tRNA modification; tRNA-queuosine biosynthesis. Functionally, catalyzes the base-exchange of a guanine (G) residue with the queuine precursor 7-aminomethyl-7-deazaguanine (PreQ1) at position 34 (anticodon wobble position) in tRNAs with GU(N) anticodons (tRNA-Asp, -Asn, -His and -Tyr). Catalysis occurs through a double-displacement mechanism. The nucleophile active site attacks the C1' of nucleotide 34 to detach the guanine base from the RNA, forming a covalent enzyme-RNA intermediate. The proton acceptor active site deprotonates the incoming PreQ1, allowing a nucleophilic attack on the C1' of the ribose to form the product. After dissociation, two additional enzymatic reactions on the tRNA convert PreQ1 to queuine (Q), resulting in the hypermodified nucleoside queuosine (7-(((4,5-cis-dihydroxy-2-cyclopenten-1-yl)amino)methyl)-7-deazaguanosine). This Streptococcus pneumoniae (strain Hungary19A-6) protein is Queuine tRNA-ribosyltransferase.